Consider the following 123-residue polypeptide: Immunoglobulin lambda variable 9-49 (123 aa).

The first 19 residues, 1–19 (MAWAPLLLTLLSLLTGSLS), serve as a signal peptide directing secretion. Residues 20–44 (QPVLTQPPSASASLGASVTLTCTLS) are framework-1. One can recognise an Ig-like domain in the interval 21–123 (PVLTQPPSAS…ADHGSGSNFV (103 aa)). Cys-41 and Cys-112 are disulfide-bonded. Residues 45 to 51 (SGYSNYK) form a complementarity-determining-1 region. The segment at 52-68 (VDWYQQRPGKGPRFVMR) is framework-2. Positions 69–76 (VGTGGIVG) are complementarity-determining-2. A framework-3 region spans residues 77–112 (SKGDGIPDRFSVLGSGLNRYLTIKNIQEEDESDYHC). Phosphotyrosine is present on Tyr-96. Thr-98 carries the post-translational modification Phosphothreonine. A complementarity-determining-3 region spans residues 113-123 (GADHGSGSNFV).

Immunoglobulins are composed of two identical heavy chains and two identical light chains; disulfide-linked.

Its subcellular location is the secreted. It localises to the cell membrane. V region of the variable domain of immunoglobulin light chains that participates in the antigen recognition. Immunoglobulins, also known as antibodies, are membrane-bound or secreted glycoproteins produced by B lymphocytes. In the recognition phase of humoral immunity, the membrane-bound immunoglobulins serve as receptors which, upon binding of a specific antigen, trigger the clonal expansion and differentiation of B lymphocytes into immunoglobulins-secreting plasma cells. Secreted immunoglobulins mediate the effector phase of humoral immunity, which results in the elimination of bound antigens. The antigen binding site is formed by the variable domain of one heavy chain, together with that of its associated light chain. Thus, each immunoglobulin has two antigen binding sites with remarkable affinity for a particular antigen. The variable domains are assembled by a process called V-(D)-J rearrangement and can then be subjected to somatic hypermutations which, after exposure to antigen and selection, allow affinity maturation for a particular antigen. This is Immunoglobulin lambda variable 9-49 from Homo sapiens (Human).